Here is a 415-residue protein sequence, read N- to C-terminus: Adenosylhomocysteinase (415 aa).

3 residues coordinate substrate: T53, D124, and E147. 148-150 (TTT) lines the NAD(+) pocket. K177 and D181 together coordinate substrate. Residues N182, 211–216 (GYGWVG), E234, N269, 290–292 (SGH), and N337 each bind NAD(+).

This sequence belongs to the adenosylhomocysteinase family. It depends on NAD(+) as a cofactor.

It localises to the cytoplasm. It catalyses the reaction S-adenosyl-L-homocysteine + H2O = L-homocysteine + adenosine. It functions in the pathway amino-acid biosynthesis; L-homocysteine biosynthesis; L-homocysteine from S-adenosyl-L-homocysteine: step 1/1. Its function is as follows. May play a key role in the regulation of the intracellular concentration of adenosylhomocysteine. In Sulfolobus acidocaldarius (strain ATCC 33909 / DSM 639 / JCM 8929 / NBRC 15157 / NCIMB 11770), this protein is Adenosylhomocysteinase.